Consider the following 380-residue polypeptide: Protein FAM110B (380 aa).

Residues 92-272 (ALGSPTLKGF…RPSLQRSKSD (181 aa)) are disordered. Residues 100-110 (GFGGGGGGAKS) are compositionally biased toward gly residues. The segment covering 127-138 (ILNSSEGSSTGS) has biased composition (polar residues). Residues 153–162 (DAAELHRHSF) are compositionally biased toward basic and acidic residues. Over residues 239–248 (KVAAPAAVKS) the composition is skewed to low complexity. Phosphoserine occurs at positions 248 and 311. The segment at 327 to 347 (DCEQSQDSNSDLRNDDSANDR) is disordered. A compositionally biased stretch (basic and acidic residues) spans 336 to 345 (SDLRNDDSAN).

It belongs to the FAM110 family.

It localises to the cytoplasm. Its subcellular location is the cytoskeleton. The protein localises to the microtubule organizing center. The protein resides in the centrosome. This is Protein FAM110B (FAM110B) from Bos taurus (Bovine).